The following is a 202-amino-acid chain: MATLKANERTDFKRSTLRKIRHSGHVPGIIYGKEITNTPVSLDSVELLKTLRDEGKNTIITIDVNGNQQSVMVTDLQTDPLKNELTHADFQVVNMSEELEAEVPIQLTGEAKGVKDGGVIQQPLHELSIKAKPKDIPQTINVDISGLEMNDVLTIADLTADGNYTFTNDPEEVVASILPPKQEAFEEDAEPSPGEEPEGENQ.

Residues 180 to 202 form a disordered region; that stretch reads PKQEAFEEDAEPSPGEEPEGENQ. Over residues 185–202 the composition is skewed to acidic residues; that stretch reads FEEDAEPSPGEEPEGENQ.

This sequence belongs to the bacterial ribosomal protein bL25 family. CTC subfamily. As to quaternary structure, part of the 50S ribosomal subunit; part of the 5S rRNA/L5/L18/L25 subcomplex. Contacts the 5S rRNA. Binds to the 5S rRNA independently of L5 and L18.

Functionally, this is one of the proteins that binds to the 5S RNA in the ribosome where it forms part of the central protuberance. The chain is Large ribosomal subunit protein bL25 from Bacillus velezensis (strain DSM 23117 / BGSC 10A6 / LMG 26770 / FZB42) (Bacillus amyloliquefaciens subsp. plantarum).